We begin with the raw amino-acid sequence, 373 residues long: Muscleblind-like protein 2 (373 aa).

4 C3H1-type zinc fingers span residues 13–41, 47–73, 176–204, and 212–238; these read WLTLEVCRQYQRGTCSRSDEECKFAHPPK, NGRVIACFDSLKGRCSRENCKYLHPPT, TDKLEVCREFQRGNCARGETDCRFAHPAD, and DNTVTVCMDYIKGRCMREKCKYFHPPA.

Belongs to the muscleblind family. As to quaternary structure, interacts with ITGA3.

It is found in the nucleus. The protein localises to the cytoplasm. Its function is as follows. Mediates pre-mRNA alternative splicing regulation. Acts either as activator or repressor of splicing on specific pre-mRNA targets. Inhibits cardiac troponin-T (TNNT2) pre-mRNA exon inclusion but induces insulin receptor (IR) pre-mRNA exon inclusion in muscle. Antagonizes the alternative splicing activity pattern of CELF proteins. RNA-binding protein that binds to 5'ACACCC-3' core sequence, termed zipcode, within the 3'UTR of ITGA3. Binds to CUG triplet repeat expansion in myotonic dystrophy muscle cells by sequestering the target RNAs. Together with RNA binding proteins RBPMS and RBFOX2, activates vascular smooth muscle cells alternative splicing events. Regulates NCOR2 alternative splicing. Seems to regulate expression and localization of ITGA3 by transporting it from the nucleus to cytoplasm at adhesion plaques. May play a role in myotonic dystrophy pathophysiology (DM). This is Muscleblind-like protein 2 (Mbnl2) from Mus musculus (Mouse).